Here is a 70-residue protein sequence, read N- to C-terminus: MVQLEQRIEDLEMKLAFQDDTIESLNQQVIRLNDLLADQQEKLRLLTSKLSQVEPSNIASQAEETPPPHY.

The protein belongs to the SlyX family.

The sequence is that of Protein SlyX homolog from Shewanella loihica (strain ATCC BAA-1088 / PV-4).